Reading from the N-terminus, the 316-residue chain is Ribosomal RNA small subunit methyltransferase H (316 aa).

Residues 35–37 (AGH), Asp-55, Phe-84, Asp-105, and Gln-112 contribute to the S-adenosyl-L-methionine site.

It belongs to the methyltransferase superfamily. RsmH family.

The protein localises to the cytoplasm. It carries out the reaction cytidine(1402) in 16S rRNA + S-adenosyl-L-methionine = N(4)-methylcytidine(1402) in 16S rRNA + S-adenosyl-L-homocysteine + H(+). Functionally, specifically methylates the N4 position of cytidine in position 1402 (C1402) of 16S rRNA. The sequence is that of Ribosomal RNA small subunit methyltransferase H from Streptococcus pneumoniae serotype 4 (strain ATCC BAA-334 / TIGR4).